Reading from the N-terminus, the 85-residue chain is Large ribosomal subunit protein bL27 (85 aa).

Positions 1-22 (MAHKKAGGSTNNGRDSESKRLG) are disordered.

The protein belongs to the bacterial ribosomal protein bL27 family.

The sequence is that of Large ribosomal subunit protein bL27 from Psychromonas ingrahamii (strain DSM 17664 / CCUG 51855 / 37).